We begin with the raw amino-acid sequence, 300 residues long: Mitochondrial GTP/GDP carrier protein 1 (300 aa).

3 Solcar repeats span residues 8–108 (QSGL…KKDF), 117–198 (GKAM…AKEY), and 208–293 (ATWS…LIPR). The next 6 membrane-spanning stretches (helical) occupy residues 14–34 (LLGS…VDTI), 85–101 (QRVY…EFLN), 122–142 (SAAA…LDVL), 173–189 (GWGW…FALF), 214–234 (FISS…LDVI), and 268–285 (GLTP…FSFA).

It belongs to the mitochondrial carrier (TC 2.A.29) family.

The protein resides in the mitochondrion inner membrane. In terms of biological role, mitochondrial GTP/GDP transporter required for GTP uptake and GDP exit from mitochondria. Involved in mitochondrial iron transport and essential for mitochondrial genome maintenance. The polypeptide is Mitochondrial GTP/GDP carrier protein 1 (GGC1) (Saccharomyces cerevisiae (strain ATCC 204508 / S288c) (Baker's yeast)).